We begin with the raw amino-acid sequence, 713 residues long: Methionine--tRNA ligase (713 aa).

The 'HIGH' region signature appears at 17–27 (PYANGPIHIGH). Residues C149, C152, C162, and C165 each contribute to the Zn(2+) site. The 'KMSKS' region signature appears at 345-349 (KLSTS). Residue T348 coordinates ATP. Residues 530 to 564 (VRTSTPDDDPAGAVGWEDAGAPLLPAGHPIPSGPD) are disordered. Residues 614–713 (DFTQLDLRAG…TEAEDGSVVR (100 aa)) enclose the tRNA-binding domain.

This sequence belongs to the class-I aminoacyl-tRNA synthetase family. MetG type 1 subfamily. In terms of assembly, homodimer. The cofactor is Zn(2+).

The protein localises to the cytoplasm. It carries out the reaction tRNA(Met) + L-methionine + ATP = L-methionyl-tRNA(Met) + AMP + diphosphate. Its function is as follows. Is required not only for elongation of protein synthesis but also for the initiation of all mRNA translation through initiator tRNA(fMet) aminoacylation. The chain is Methionine--tRNA ligase from Salinibacter ruber (strain DSM 13855 / M31).